A 200-amino-acid chain; its full sequence is Charged multivesicular body protein 6 (200 aa).

Gly-2 carries the N-myristoyl glycine lipid modification. A coiled-coil region spans residues Arg-10–Thr-94. The Type-2 MIT-interacting motif motif lies at Leu-168 to Pro-179. A disordered region spans residues Glu-169–Ser-200.

The protein belongs to the SNF7 family. In terms of assembly, probable core component of the endosomal sorting required for transport complex III (ESCRT-III). ESCRT-III components are thought to multimerize to form a flat lattice on the perimeter membrane of the endosome.

It is found in the endomembrane system. The protein localises to the late endosome membrane. Probable core component of the endosomal sorting required for transport complex III (ESCRT-III) which is involved in multivesicular bodies (MVBs) formation and sorting of endosomal cargo proteins into MVBs. MVBs contain intraluminal vesicles (ILVs) that are generated by invagination and scission from the limiting membrane of the endosome and mostly are delivered to lysosomes enabling degradation of membrane proteins, such as stimulated growth factor receptors, lysosomal enzymes and lipids. In the ESCRT-III complex, it probably serves as an acceptor for the ESCRT-II complex on endosomal membranes. This chain is Charged multivesicular body protein 6 (CHMP6), found in Gallus gallus (Chicken).